Reading from the N-terminus, the 134-residue chain is Small ribosomal subunit protein bS16 (134 aa).

Residues 81 to 134 (LAKRPARSNPKKAEPGKKAQERLAAARQAEEEAKAAAEAAAAAPAEAPAEEAAS) are disordered. The segment covering 91–101 (KKAEPGKKAQE) has biased composition (basic and acidic residues). The span at 116–134 (AAEAAAAAPAEAPAEEAAS) shows a compositional bias: low complexity.

It belongs to the bacterial ribosomal protein bS16 family.

This Chelativorans sp. (strain BNC1) protein is Small ribosomal subunit protein bS16.